The sequence spans 147 residues: ATP synthase epsilon chain 2 (147 aa).

It belongs to the ATPase epsilon chain family. In terms of assembly, F-type ATPases have 2 components, CF(1) - the catalytic core - and CF(0) - the membrane proton channel. CF(1) has five subunits: alpha(3), beta(3), gamma(1), delta(1), epsilon(1). CF(0) has three main subunits: a, b and c.

Its subcellular location is the cell inner membrane. In terms of biological role, produces ATP from ADP in the presence of a proton gradient across the membrane. This is ATP synthase epsilon chain 2 from Photobacterium profundum (strain SS9).